Reading from the N-terminus, the 201-residue chain is MSRYRGPRLKKIRRLGALPGLTRKTPKSGSNLKKKFHSGKKEQYRIRLQEKQKLRFHYGLTERQLLRYVHIAGKAKRSTGQVLLQLLEMRLDNILFRLGMASTIPGARQLVNHRHILVNGRIVNIPSFRCKPRDIITTKDNQRSKGLVQNYIASSDPGKLPKHLTIDTLEYKGLVNKILDRKWVGLKINELLVVEYYSRQT.

The tract at residues 17-36 (ALPGLTRKTPKSGSNLKKKF) is disordered. An S4 RNA-binding domain is found at 89 to 157 (MRLDNILFRL…VQNYIASSDP (69 aa)).

This sequence belongs to the universal ribosomal protein uS4 family. Part of the 30S ribosomal subunit. Contacts protein S5. The interaction surface between S4 and S5 is involved in control of translational fidelity.

Its subcellular location is the plastid. The protein resides in the chloroplast. One of the primary rRNA binding proteins, it binds directly to 16S rRNA where it nucleates assembly of the body of the 30S subunit. In terms of biological role, with S5 and S12 plays an important role in translational accuracy. The sequence is that of Small ribosomal subunit protein uS4c (rps4) from Agrostis stolonifera (Creeping bentgrass).